Consider the following 425-residue polypeptide: Pleckstrin homology domain-containing family A member 2 (425 aa).

Residues 7–113 (QNRICGFLDI…WVEALNQASK (107 aa)) form the PH 1 domain. A Glycyl lysine isopeptide (Lys-Gly) (interchain with G-Cter in SUMO2) cross-link involves residue Lys-141. The residue at position 184 (Ser-184) is a Phosphoserine. A PH 2 domain is found at 198–298 (PLIKSGYCVK…WIKEIGAAVQ (101 aa)). The segment covering 312–330 (SISLTRPGSSSLSSGPNSI) has biased composition (low complexity). Residues 312-332 (SISLTRPGSSSLSSGPNSILC) are disordered. Residues Ser-314 and Ser-349 each carry the phosphoserine modification. A disordered region spans residues 352–425 (SSWQPWTPVP…DDENIRTSDV (74 aa)). A compositionally biased stretch (basic and acidic residues) spans 400 to 410 (RSEPQHPKEKP).

Binds MPDZ and PTPN13. In terms of tissue distribution, highly expressed in heart, kidney, spleen and peripheral blood leukocytes. Detected at lower levels in brain, skeletal muscle, colon, thymus, liver, small intestine, placenta and lung.

Its subcellular location is the cytoplasm. It is found in the cell membrane. It localises to the nucleus. Binds specifically to phosphatidylinositol 3,4-diphosphate (PtdIns3,4P2), but not to other phosphoinositides. May recruit other proteins to the plasma membrane. In Homo sapiens (Human), this protein is Pleckstrin homology domain-containing family A member 2 (PLEKHA2).